The primary structure comprises 314 residues: Olfactory receptor 51I1 (314 aa).

Residues 1-27 (MLGLNGTPFQPATLQLTGIPGIQTGLT) are Extracellular-facing. Residues 28 to 48 (WVALIFCILYMISIVGNLSIL) form a helical membrane-spanning segment. Topologically, residues 49 to 56 (TLVFWEPA) are cytoplasmic. A helical transmembrane segment spans residues 57–77 (LHQPMYYFLSMLALNDLGVSF). The Extracellular segment spans residues 78–101 (STLPTVISTFCFNYNHVAFNACLV). Cys-99 and Cys-191 form a disulfide bridge. A helical transmembrane segment spans residues 102–122 (QMFFIHTFSFMESGILLAMSL). Residues 123–141 (DRFVAICYPLRYVTVLTHN) lie on the Cytoplasmic side of the membrane. The helical transmembrane segment at 142-162 (RILAMGLGILTKSFTTLFPFP) threads the bilayer. The Extracellular portion of the chain corresponds to 163-198 (FVVKRLPFCKGNVLHHSYCLHPDLMKVACGDIHVNN). Residues 199–219 (IYGLLVIIFTYGMDSTFILLS) traverse the membrane as a helical segment. Topologically, residues 220–239 (YALILRAMLVIISQEQRLKA) are cytoplasmic. The chain crosses the membrane as a helical span at residues 240–260 (LNTCMSHICAVLAFYVPIIAV). Over 261 to 275 (SMIHRFWKSAPPVVH) the chain is Extracellular. Residues 276 to 296 (VMMSNVYLFVPPMLNPIIYSV) traverse the membrane as a helical segment. Topologically, residues 297-314 (KTKEIRKGILKFFHKSQA) are cytoplasmic.

This sequence belongs to the G-protein coupled receptor 1 family.

It localises to the cell membrane. In terms of biological role, odorant receptor. The sequence is that of Olfactory receptor 51I1 (OR51I1) from Homo sapiens (Human).